Here is a 492-residue protein sequence, read N- to C-terminus: Glutamyl-tRNA(Gln) amidotransferase subunit A (492 aa).

Residues lysine 79 and serine 154 each act as charge relay system in the active site. Serine 178 acts as the Acyl-ester intermediate in catalysis.

This sequence belongs to the amidase family. GatA subfamily. In terms of assembly, heterotrimer of A, B and C subunits.

The enzyme catalyses L-glutamyl-tRNA(Gln) + L-glutamine + ATP + H2O = L-glutaminyl-tRNA(Gln) + L-glutamate + ADP + phosphate + H(+). In terms of biological role, allows the formation of correctly charged Gln-tRNA(Gln) through the transamidation of misacylated Glu-tRNA(Gln) in organisms which lack glutaminyl-tRNA synthetase. The reaction takes place in the presence of glutamine and ATP through an activated gamma-phospho-Glu-tRNA(Gln). This Desulforudis audaxviator (strain MP104C) protein is Glutamyl-tRNA(Gln) amidotransferase subunit A.